A 677-amino-acid polypeptide reads, in one-letter code: Glutamine--fructose-6-phosphate aminotransferase [isomerizing] 1 (677 aa).

Cys-2 (nucleophile) is an active-site residue. Positions 2-269 constitute a Glutamine amidotransferase type-2 domain; that stretch reads CGIFAYLNFH…DGEVVNLKDG (268 aa). 2 SIS domains span residues 353-492 and 524-667; these read HLKT…DTIS and LAQL…VDQP. Residues 370–371, 415–417, Thr-420, and His-571 each bind substrate; these read TS and SQS.

Homotetramer, may also exist as homodimers. As to expression, highly expressed in flowers specifically in mature anthers, mature pollen grains and pollen tubes. Barely observed in roots, leaves and stems.

It catalyses the reaction D-fructose 6-phosphate + L-glutamine = D-glucosamine 6-phosphate + L-glutamate. Its pathway is nucleotide-sugar biosynthesis; UDP-N-acetyl-alpha-D-glucosamine biosynthesis; alpha-D-glucosamine 6-phosphate from D-fructose 6-phosphate: step 1/1. In terms of biological role, controls the flux of glucose into the hexosamine biosynthetic pathway (HBP) leading to glucosamine (GlcN) content homeostasis. Involved in regulating the availability of precursors for N- and O-linked glycosylation of proteins. Required during pollen maturation and pollen tube formation by triggering polar deposition of pectin and callose in the pollen cell wall. Promotes tolerance to tunicamycin (Tm), an inhibitor of proteins N-glycosylation in endoplasmic reticulum (ER). The sequence is that of Glutamine--fructose-6-phosphate aminotransferase [isomerizing] 1 from Arabidopsis thaliana (Mouse-ear cress).